Here is a 63-residue protein sequence, read N- to C-terminus: uncharacterized protein (63 aa).

Residues Leu-4–Ile-24 form a helical membrane-spanning segment.

It is found in the membrane. This is an uncharacterized protein from Invertebrate iridescent virus 6 (IIV-6).